A 146-amino-acid polypeptide reads, in one-letter code: MKKIDVTEAIILAKKERNLTWEGIAAELGMGTVWVTSACLGMNSMPEAVAEKLCAYLELPEGAKAALMEYPTKAWDKEVPQDPLIYRLYEVVGVYGDTLKEVIQEKFGDGIMSAIDFTMDVAKEENPKGDRVVLTLNGKFLPYKAW.

Active-site residues include Arg87, Glu90, and Ser113.

It belongs to the cyanase family.

The catalysed reaction is cyanate + hydrogencarbonate + 3 H(+) = NH4(+) + 2 CO2. Its function is as follows. Catalyzes the reaction of cyanate with bicarbonate to produce ammonia and carbon dioxide. This chain is Cyanate hydratase, found in Teredinibacter turnerae (strain ATCC 39867 / T7901).